A 248-amino-acid polypeptide reads, in one-letter code: Probable transcriptional regulatory protein PSPPH_3775 (248 aa).

The protein belongs to the TACO1 family.

Its subcellular location is the cytoplasm. The chain is Probable transcriptional regulatory protein PSPPH_3775 from Pseudomonas savastanoi pv. phaseolicola (strain 1448A / Race 6) (Pseudomonas syringae pv. phaseolicola (strain 1448A / Race 6)).